A 256-amino-acid polypeptide reads, in one-letter code: GDSL esterase/lipase At1g18120 (256 aa).

The first 49 residues, 1–49 (MYRVYKNNKFILISIPRITNKLWQKNCNLVILLGVLLVLTLFHDPIIVA), serve as a signal peptide directing secretion. The Nucleophile role is filled by S67. A glycan (N-linked (GlcNAc...) asparagine) is linked at N181.

This sequence belongs to the 'GDSL' lipolytic enzyme family.

It localises to the secreted. The polypeptide is GDSL esterase/lipase At1g18120 (Arabidopsis thaliana (Mouse-ear cress)).